The chain runs to 196 residues: GTP cyclohydrolase 1 (196 aa).

The Zn(2+) site is built by C86, H89, and C158.

It belongs to the GTP cyclohydrolase I family. In terms of assembly, homomer.

The catalysed reaction is GTP + H2O = 7,8-dihydroneopterin 3'-triphosphate + formate + H(+). The protein operates within cofactor biosynthesis; 7,8-dihydroneopterin triphosphate biosynthesis; 7,8-dihydroneopterin triphosphate from GTP: step 1/1. The sequence is that of GTP cyclohydrolase 1 from Clostridium botulinum (strain Loch Maree / Type A3).